We begin with the raw amino-acid sequence, 449 residues long: Exodeoxyribonuclease 7 large subunit (449 aa).

This sequence belongs to the XseA family. In terms of assembly, heterooligomer composed of large and small subunits.

The protein localises to the cytoplasm. The enzyme catalyses Exonucleolytic cleavage in either 5'- to 3'- or 3'- to 5'-direction to yield nucleoside 5'-phosphates.. In terms of biological role, bidirectionally degrades single-stranded DNA into large acid-insoluble oligonucleotides, which are then degraded further into small acid-soluble oligonucleotides. The sequence is that of Exodeoxyribonuclease 7 large subunit from Salmonella paratyphi A (strain ATCC 9150 / SARB42).